The chain runs to 418 residues: ADP-ribose glycohydrolase MACROD2 (418 aa).

The region spanning Pro-57–Phe-238 is the Macro domain. Residues Gly-75 to Ile-77, Ala-88 to Asn-90, Gly-95 to Asp-100, Ile-183 to Gly-189, and Phe-222 each bind substrate. Residues Phe-238–Ala-418 are disordered. Basic and acidic residues predominate over residues Lys-250–Gly-262. The segment covering Thr-295–Ala-318 has biased composition (polar residues). Residues Pro-321–Glu-360 are compositionally biased toward basic and acidic residues. A compositionally biased stretch (acidic residues) spans Glu-377–Ser-389.

It belongs to the MacroD-type family. MacroD1/2-like subfamily.

The protein localises to the nucleus. The enzyme catalyses 2''-O-acetyl-ADP-D-ribose + H2O = ADP-D-ribose + acetate + H(+). The catalysed reaction is 4-O-(ADP-D-ribosyl)-L-aspartyl-[protein] + H2O = L-aspartyl-[protein] + ADP-D-ribose + H(+). It carries out the reaction 5-O-(ADP-D-ribosyl)-L-glutamyl-[protein] + H2O = L-glutamyl-[protein] + ADP-D-ribose + H(+). It catalyses the reaction alpha-NAD(+) + H2O = ADP-D-ribose + nicotinamide + H(+). Its activity is regulated as follows. Subject to product inhibition by ADP-ribose. Removes ADP-ribose from aspartate and glutamate residues in proteins bearing a single ADP-ribose moiety. Inactive towards proteins bearing poly-ADP-ribose. Deacetylates O-acetyl-ADP ribose, a signaling molecule generated by the deacetylation of acetylated lysine residues in histones and other proteins. In Xenopus laevis (African clawed frog), this protein is ADP-ribose glycohydrolase MACROD2.